The chain runs to 535 residues: MAALLAAAAVRARILQVSSKVKSSPTWYSASSFSSSVPTVKLFIGGKFVESKSDKWIDIHNPATNEVIGRVPQATKAEMDAAIASCKRAFPAWADTSVLSRQQVLLRYQQLIKENLKEIAKLITLEQGKTLADAEGDVFRGLQVVEHACSVTSLMMGETMPSITKDMDLYSYRLPLGVCAGIAPFNFPAMIPLWMFPMAMVCGNTFLMKPSERVPGATMLLAKLLQDSGAPDGTLNIIHGQHEAVNFICDHPDIKAISFVGSNKAGEYIFERGSRHGKRVQANMGAKNHGVVMPDANKENTLNQLVGAAFGAAGQRCMALSTAVLVGEAKKWLPELVEHAKNLRVNAGDQPGADLGPLITPQAKERVCNLIDSGTKEGASILLDGRKIKVKGYENGNFVGPTIISNVKPNMTCYKEEIFGPVLVVLETETLDEAIQIVNNNPYGNGTAIFTTNGATARKYAHLVDVGQVGVNVPIPVPLPMFSFTGSRSSFRGDTNFYGKQGIQFYTQLKTITSQWKEEDATLSSPAVVMPTMGR.

The transit peptide at 1 to 33 (MAALLAAAAVRARILQVSSKVKSSPTWYSASSF) directs the protein to the mitochondrion. N6-acetyllysine; alternate occurs at positions 47, 52, 55, and 76. N6-succinyllysine; alternate is present on residues Lys47, Lys52, Lys55, and Lys76. At Lys87 the chain carries N6-acetyllysine. N6-acetyllysine; alternate occurs at positions 117 and 129. N6-succinyllysine; alternate occurs at positions 117 and 129. 6 residues coordinate NAD(+): Ala183, Phe185, Lys209, Glu212, Arg213, and Ser262. Ser262 is subject to Phosphoserine. Lys298 is modified (N6-acetyllysine). Cys317 functions as the Nucleophile in the catalytic mechanism. N6-acetyllysine occurs at positions 330 and 331. N6-acetyllysine; alternate occurs at positions 364 and 376. N6-succinyllysine; alternate occurs at positions 364 and 376. Ser380 carries the post-translational modification Phosphoserine. At Lys391 the chain carries N6-succinyllysine. Glu417 provides a ligand contact to NAD(+). Lys500 is modified (N6-acetyllysine). Lys517 carries the N6-succinyllysine modification.

This sequence belongs to the aldehyde dehydrogenase family. Homotetramer.

The protein resides in the mitochondrion. It carries out the reaction 3-oxopropanoate + NAD(+) + CoA + H2O = hydrogencarbonate + acetyl-CoA + NADH + H(+). The catalysed reaction is 2-methyl-3-oxopropanoate + NAD(+) + CoA + H2O = propanoyl-CoA + hydrogencarbonate + NADH + H(+). It catalyses the reaction (R)-2-methyl-3-oxopropanoate + NAD(+) + CoA + H2O = propanoyl-CoA + hydrogencarbonate + NADH + H(+). The enzyme catalyses (S)-2-methyl-3-oxopropanoate + NAD(+) + CoA + H2O = propanoyl-CoA + hydrogencarbonate + NADH + H(+). Malonate and methylmalonate semialdehyde dehydrogenase involved in the catabolism of valine, thymine, and compounds catabolized by way of beta-alanine, including uracil and cytidine. The sequence is that of Methylmalonate-semialdehyde/malonate-semialdehyde dehydrogenase [acylating], mitochondrial from Homo sapiens (Human).